A 218-amino-acid polypeptide reads, in one-letter code: NAD(P)H-quinone oxidoreductase subunit I (218 aa).

4Fe-4S ferredoxin-type domains lie at 55–84 (GRIHYEFDKCIACEVCVRVCPINLPVVDWV) and 95–124 (RNYSIDFGACIFCGNCVEYCPTNCLSMTEE). [4Fe-4S] cluster is bound by residues cysteine 64, cysteine 67, cysteine 70, cysteine 74, cysteine 104, cysteine 107, cysteine 110, and cysteine 114. The disordered stretch occupies residues 169 to 218 (MDPHELPANQQRAGKLPSQIIKELQAEKSEEKGNNNSSDIVPNKLNSTNK). The span at 192 to 201 (LQAEKSEEKG) shows a compositional bias: basic and acidic residues. A compositionally biased stretch (polar residues) spans 202–218 (NNNSSDIVPNKLNSTNK).

The protein belongs to the complex I 23 kDa subunit family. NDH-1 is composed of at least 11 different subunits. Requires [4Fe-4S] cluster as cofactor.

It localises to the cellular thylakoid membrane. It carries out the reaction a plastoquinone + NADH + (n+1) H(+)(in) = a plastoquinol + NAD(+) + n H(+)(out). It catalyses the reaction a plastoquinone + NADPH + (n+1) H(+)(in) = a plastoquinol + NADP(+) + n H(+)(out). In terms of biological role, NDH-1 shuttles electrons from an unknown electron donor, via FMN and iron-sulfur (Fe-S) centers, to quinones in the respiratory and/or the photosynthetic chain. The immediate electron acceptor for the enzyme in this species is believed to be plastoquinone. Couples the redox reaction to proton translocation, and thus conserves the redox energy in a proton gradient. The polypeptide is NAD(P)H-quinone oxidoreductase subunit I (Prochlorococcus marinus (strain NATL1A)).